The sequence spans 283 residues: Polyamine aminopropyltransferase (283 aa).

Residues 2 to 237 form the PABS domain; that stretch reads ELWYTDQHTK…GHWLFGFASK (236 aa). Gln31 serves as a coordination point for S-methyl-5'-thioadenosine. Residues His62 and Asp86 each coordinate spermidine. S-methyl-5'-thioadenosine-binding positions include Glu106 and 137–138; that span reads EG. Asp155 functions as the Proton acceptor in the catalytic mechanism. 155–158 contributes to the spermidine binding site; that stretch reads DCAD. S-methyl-5'-thioadenosine is bound at residue Pro162.

Belongs to the spermidine/spermine synthase family. In terms of assembly, homodimer or homotetramer.

The protein resides in the cytoplasm. It carries out the reaction S-adenosyl 3-(methylsulfanyl)propylamine + putrescine = S-methyl-5'-thioadenosine + spermidine + H(+). The protein operates within amine and polyamine biosynthesis; spermidine biosynthesis; spermidine from putrescine: step 1/1. Functionally, catalyzes the irreversible transfer of a propylamine group from the amino donor S-adenosylmethioninamine (decarboxy-AdoMet) to putrescine (1,4-diaminobutane) to yield spermidine. This chain is Polyamine aminopropyltransferase, found in Lachnoclostridium phytofermentans (strain ATCC 700394 / DSM 18823 / ISDg) (Clostridium phytofermentans).